We begin with the raw amino-acid sequence, 479 residues long: Ribosomal RNA small subunit methyltransferase F (479 aa).

S-adenosyl-L-methionine contacts are provided by residues 125–131 (AAAPGSK), Glu149, Asp176, and Asp194. The active-site Nucleophile is the Cys247.

Belongs to the class I-like SAM-binding methyltransferase superfamily. RsmB/NOP family.

The protein localises to the cytoplasm. The catalysed reaction is cytidine(1407) in 16S rRNA + S-adenosyl-L-methionine = 5-methylcytidine(1407) in 16S rRNA + S-adenosyl-L-homocysteine + H(+). Specifically methylates the cytosine at position 1407 (m5C1407) of 16S rRNA. The protein is Ribosomal RNA small subunit methyltransferase F of Shigella boydii serotype 4 (strain Sb227).